The chain runs to 286 residues: MEAGPSTASPGVSVSPAPALTAGEVQLLKVPQKRFYRQRAHANVFIDHELDYPKRPELMDWSTHYPAYFSQPNEDGTITQGEKKVEWADVGCGFGGLLMALAPLFPEKLMLGMEIRTSVTKYVTDRIAATRQAQSLLPADSVDTKPGGYQNVSVIKANSMKHMPNFFAKGQLEKIFFLFPDPHFKNRKHKARIITPALLAEYAYVLRPGGILYTVTDVKDLHEWMAHHLHAHPLFEYIPTETLSDDPILEAARTATEEGQKVERNKGDKWVACFRRKEDPKEEDED.

Residues glycine 91, 114-115 (EI), 158-159 (NS), and leucine 178 contribute to the S-adenosyl-L-methionine site. Residue aspartate 181 is part of the active site. Residue 256-258 (TEE) coordinates S-adenosyl-L-methionine.

The protein belongs to the class I-like SAM-binding methyltransferase superfamily. TrmB family. Forms a complex with TRM82.

It localises to the nucleus. The catalysed reaction is guanosine(46) in tRNA + S-adenosyl-L-methionine = N(7)-methylguanosine(46) in tRNA + S-adenosyl-L-homocysteine. Its pathway is tRNA modification; N(7)-methylguanine-tRNA biosynthesis. Catalyzes the formation of N(7)-methylguanine at position 46 (m7G46) in tRNA. The protein is tRNA (guanine-N(7)-)-methyltransferase of Cryptococcus neoformans var. neoformans serotype D (strain B-3501A) (Filobasidiella neoformans).